Consider the following 334-residue polypeptide: D-fructose 1,6-bisphosphatase class 2/sedoheptulose 1,7-bisphosphatase (334 aa).

The Mn(2+) site is built by Asp33, Glu57, Asp85, and Glu88. Residues 88 to 90, Tyr119, 164 to 166, and 186 to 188 each bind substrate; these read EGT, RAR, and DGD. Glu213 is a Mn(2+) binding site.

It belongs to the FBPase class 2 family. Homotetramer. The cofactor is Mn(2+).

It catalyses the reaction beta-D-fructose 1,6-bisphosphate + H2O = beta-D-fructose 6-phosphate + phosphate. The enzyme catalyses D-sedoheptulose 1,7-bisphosphate + H2O = D-sedoheptulose 7-phosphate + phosphate. The protein operates within carbohydrate biosynthesis; Calvin cycle. In terms of biological role, catalyzes the hydrolysis of fructose 1,6-bisphosphate (Fru 1,6-P2) and sedoheptulose 1,7-bisphosphate (Sed 1,7-P2) to fructose 6-phosphate and sedoheptulose 7-phosphate, respectively. The chain is D-fructose 1,6-bisphosphatase class 2/sedoheptulose 1,7-bisphosphatase from Synechococcus sp. (strain CC9311).